A 253-amino-acid chain; its full sequence is Probable transcriptional regulatory protein syc0529_d (253 aa).

It belongs to the TACO1 family.

The protein localises to the cytoplasm. The chain is Probable transcriptional regulatory protein syc0529_d from Synechococcus sp. (strain ATCC 27144 / PCC 6301 / SAUG 1402/1) (Anacystis nidulans).